Consider the following 143-residue polypeptide: Anti-sigma F factor (143 aa).

This sequence belongs to the anti-sigma-factor family.

It carries out the reaction L-seryl-[protein] + ATP = O-phospho-L-seryl-[protein] + ADP + H(+). The catalysed reaction is L-threonyl-[protein] + ATP = O-phospho-L-threonyl-[protein] + ADP + H(+). Its function is as follows. Binds to sigma F and blocks its ability to form an RNA polymerase holoenzyme (E-sigma F). Phosphorylates SpoIIAA on a serine residue. This phosphorylation may enable SpoIIAA to act as an anti-anti-sigma factor that counteracts SpoIIAB and thus releases sigma F from inhibition. This is Anti-sigma F factor from Thermoanaerobacter pseudethanolicus (strain ATCC 33223 / 39E) (Clostridium thermohydrosulfuricum).